The sequence spans 355 residues: Arginine kinase (355 aa).

In terms of domain architecture, Phosphagen kinase N-terminal spans 6–90; that stretch reads TLEKLEAGFS…FDPIIEDYHN (85 aa). 63–67 lines the substrate pocket; sequence GVGIY. The region spanning 118 to 355 is the Phosphagen kinase C-terminal domain; sequence FVVSTRVRCG…AELIKIEKSL (238 aa). Residues 121–125 and histidine 184 each bind ATP; that span reads STRVR. Residue glutamate 224 coordinates substrate. Arginine 228 lines the ATP pocket. A substrate-binding site is contributed by cysteine 270. Residues 279 to 283 and 308 to 313 contribute to the ATP site; these read RASVH and RGTRGE. Residue glutamate 313 coordinates substrate.

Belongs to the ATP:guanido phosphotransferase family.

The catalysed reaction is L-arginine + ATP = N(omega)-phospho-L-arginine + ADP + H(+). The polypeptide is Arginine kinase (ARGK) (Plodia interpunctella (Indianmeal moth)).